The sequence spans 197 residues: Large ribosomal subunit protein bL17 (197 aa).

A disordered region spans residues D120–T197. Residues G127–R136 are compositionally biased toward gly residues. Positions S159–T197 are enriched in acidic residues.

This sequence belongs to the bacterial ribosomal protein bL17 family. Part of the 50S ribosomal subunit. Contacts protein L32.

In Salinibacter ruber (strain DSM 13855 / M31), this protein is Large ribosomal subunit protein bL17.